We begin with the raw amino-acid sequence, 115 residues long: Probable mycobacterial cidal antitoxin Rv3188 (115 aa).

Belongs to the MbcA/ParS/Xre antitoxin family. As to quaternary structure, forms a heterotetramer with cognate toxin Rv3189.

Functionally, probable antitoxin component of a type II toxin-antitoxin (TA) system. Neutralizes the activity of cognate toxin Rv3189 by blocking access to the toxin active site. The protein is Probable mycobacterial cidal antitoxin Rv3188 of Mycobacterium tuberculosis (strain ATCC 25618 / H37Rv).